We begin with the raw amino-acid sequence, 298 residues long: Acidic endochitinase (298 aa).

The first 29 residues, 1–29 (MKPNMACLKQVSALLLPLLFISFFKPSHA), serve as a signal peptide directing secretion. The GH18 domain maps to 30–298 (GGISVYWGQN…GYSGAIIGSV (269 aa)). Cystine bridges form between cysteine 49-cysteine 96 and cysteine 79-cysteine 86. The active-site Proton donor is glutamate 156. Cysteine 185 and cysteine 214 form a disulfide bridge.

The protein belongs to the glycosyl hydrolase 18 family. Chitinase class II subfamily.

The protein localises to the secreted. It localises to the extracellular space. It catalyses the reaction Random endo-hydrolysis of N-acetyl-beta-D-glucosaminide (1-&gt;4)-beta-linkages in chitin and chitodextrins.. This protein functions as a defense against chitin containing fungal pathogens. The polypeptide is Acidic endochitinase (Phaseolus angularis (Azuki bean)).